We begin with the raw amino-acid sequence, 533 residues long: DNA-directed RNA polymerase III subunit RPC3 (533 aa).

A disordered region spans residues 161-183; it reads PLVPDTDSSDPGPPPPAPNLVIN. Serine 194 bears the Phosphoserine mark. The tract at residues 197 to 228 is disordered; the sequence is GKGKRRRSSDEDAAGEPKAKKPRCTDNEEPTP. A compositionally biased stretch (basic and acidic residues) spans 211–222; the sequence is GEPKAKKPRCTD.

Belongs to the eukaryotic RPC3/POLR3C RNA polymerase subunit family. In terms of assembly, component of the RNA polymerase III complex consisting of 17 subunits: a ten-subunit horseshoe-shaped catalytic core composed of POLR3A/RPC1, POLR3B/RPC2, POLR1C/RPAC1, POLR1D/RPAC2, POLR3K/RPC10, POLR2E/RPABC1, POLR2F/RPABC2, POLR2H/RPABC3, POLR2K/RPABC4 and POLR2L/RPABC5; a mobile stalk composed of two subunits POLR3H/RPC8 and CRCP/RPC9, protruding from the core and functioning primarily in transcription initiation; and additional subunits homologous to general transcription factors of the RNA polymerase II machinery, POLR3C/RPC3-POLR3F/RPC6-POLR3G/RPC7 heterotrimer required for transcription initiation and POLR3D/RPC4-POLR3E/RPC5 heterodimer involved in both transcription initiation and termination. Directly interacts with POLR3G/RPC7 and POLR3GL. Directly interacts with POLR3F/RPC6. Interacts with GTF3C4. As part of the RNA polymerase III complex, interacts with PKP2.

It is found in the nucleus. DNA-dependent RNA polymerase catalyzes the transcription of DNA into RNA using the four ribonucleoside triphosphates as substrates. Specific peripheric component of RNA polymerase III (Pol III) which synthesizes small non-coding RNAs including 5S rRNA, snRNAs, tRNAs and miRNAs from at least 500 distinct genomic loci. Part of POLR3C/RPC3-POLR3F/RPC6-POLR3G/RPC7 heterotrimer, coordinates the dynamics of Pol III stalk and clamp modules during the transition from apo to elongation state. Pol III plays a key role in sensing and limiting infection by intracellular bacteria and DNA viruses. Acts as a nuclear and cytosolic DNA sensor involved in innate immune response. Can sense non-self dsDNA that serves as template for transcription into dsRNA. The non-self RNA polymerase III transcripts, such as Epstein-Barr virus-encoded RNAs (EBERs) induce type I interferon and NF-kappa-B through the RIG-I pathway. Preferentially binds single-stranded DNA (ssDNA) in a sequence-independent manner. The protein is DNA-directed RNA polymerase III subunit RPC3 of Rattus norvegicus (Rat).